Consider the following 474-residue polypeptide: ATP-dependent rRNA helicase RRP3 (474 aa).

Residues 1–10 (MPSMKRRKLS) are compositionally biased toward basic residues. The disordered stretch occupies residues 1-43 (MPSMKRRKLSHTPPQGEAEDGFSDSETSQASLQETPGNDEKIE). The span at 24–36 (DSETSQASLQETP) shows a compositional bias: polar residues. Positions 48–76 (KSFKDLGIIDSLCEACDSLGYKAPTQIQA) match the Q motif motif. Residues 79-250 (IPLALQGRDL…RASLSNPLRV (172 aa)) form the Helicase ATP-binding domain. 92 to 99 (AETGSGKT) is an ATP binding site. The DEAD box signature appears at 198–201 (DEAD). The Helicase C-terminal domain occupies 278 to 422 (YLIYLLNEFP…EYKVEKEEVM (145 aa)). Positions 442–474 (LHENRGKKGATLRNRRIGKGAKRSRDEMDREEG) are disordered. Basic residues predominate over residues 448-463 (KKGATLRNRRIGKGAK). The span at 464 to 474 (RSRDEMDREEG) shows a compositional bias: basic and acidic residues.

Belongs to the DEAD box helicase family. DDX47/RRP3 subfamily. Interacts with the SSU processome.

It localises to the nucleus. It carries out the reaction ATP + H2O = ADP + phosphate + H(+). ATP-dependent rRNA helicase required for pre-ribosomal RNA processing. Involved in the maturation of the 35S-pre-rRNA and to its cleavage to mature 18S rRNA. This chain is ATP-dependent rRNA helicase RRP3, found in Coccidioides immitis (strain RS) (Valley fever fungus).